A 1094-amino-acid chain; its full sequence is Carbamoyl phosphate synthase large chain (1094 aa).

The segment at 1–402 is carboxyphosphate synthetic domain; sequence MPRRSDLHRI…AFQKALRALE (402 aa). Positions 129, 169, 175, 176, 208, 210, 215, 241, 242, 243, 285, and 299 each coordinate ATP. An ATP-grasp 1 domain is found at 133-328; that stretch reads GEAMEKIGLR…IARIGAKLAV (196 aa). Residues glutamine 285, glutamate 299, and asparagine 301 each contribute to the Mg(2+) site. Glutamine 285, glutamate 299, and asparagine 301 together coordinate Mn(2+). The interval 403–552 is oligomerization domain; it reads TGRSGWTIAE…YLYGNYDEES (150 aa). The interval 553-936 is carbamoyl phosphate synthetic domain; it reads EAATEGRKKV…AFMKSQLAAD (384 aa). The ATP-grasp 2 domain occupies 679–870; the sequence is EAIARELGIE…LPSVAARLML (192 aa). Residues arginine 715, arginine 754, leucine 756, glutamate 761, glycine 786, isoleucine 787, histidine 788, serine 789, glutamine 829, and glutamate 841 each contribute to the ATP site. 3 residues coordinate Mg(2+): glutamine 829, glutamate 841, and asparagine 843. Glutamine 829, glutamate 841, and asparagine 843 together coordinate Mn(2+). The MGS-like domain occupies 937-1077; the sequence is NALPREGTVF…QEWHEILRAP (141 aa). An allosteric domain region spans residues 937–1094; that stretch reads NALPREGTVF…AGSTQPAGVA (158 aa).

The protein belongs to the CarB family. Composed of two chains; the small (or glutamine) chain promotes the hydrolysis of glutamine to ammonia, which is used by the large (or ammonia) chain to synthesize carbamoyl phosphate. Tetramer of heterodimers (alpha,beta)4. It depends on Mg(2+) as a cofactor. Mn(2+) is required as a cofactor.

The enzyme catalyses hydrogencarbonate + L-glutamine + 2 ATP + H2O = carbamoyl phosphate + L-glutamate + 2 ADP + phosphate + 2 H(+). It carries out the reaction hydrogencarbonate + NH4(+) + 2 ATP = carbamoyl phosphate + 2 ADP + phosphate + 2 H(+). It functions in the pathway amino-acid biosynthesis; L-arginine biosynthesis; carbamoyl phosphate from bicarbonate: step 1/1. The protein operates within pyrimidine metabolism; UMP biosynthesis via de novo pathway; (S)-dihydroorotate from bicarbonate: step 1/3. Its function is as follows. Large subunit of the glutamine-dependent carbamoyl phosphate synthetase (CPSase). CPSase catalyzes the formation of carbamoyl phosphate from the ammonia moiety of glutamine, carbonate, and phosphate donated by ATP, constituting the first step of 2 biosynthetic pathways, one leading to arginine and/or urea and the other to pyrimidine nucleotides. The large subunit (synthetase) binds the substrates ammonia (free or transferred from glutamine from the small subunit), hydrogencarbonate and ATP and carries out an ATP-coupled ligase reaction, activating hydrogencarbonate by forming carboxy phosphate which reacts with ammonia to form carbamoyl phosphate. The chain is Carbamoyl phosphate synthase large chain from Gemmatimonas aurantiaca (strain DSM 14586 / JCM 11422 / NBRC 100505 / T-27).